Reading from the N-terminus, the 338-residue chain is Holliday junction branch migration complex subunit RuvB (338 aa).

Residues 1–181 (MTTRTISPEK…FGVISRLEFY (181 aa)) are large ATPase domain (RuvB-L). Residues Leu20, Arg21, Gly62, Lys65, Thr66, Thr67, 128–130 (EDF), Arg171, Tyr181, and Arg218 each bind ATP. Thr66 contacts Mg(2+). The segment at 182 to 252 (TDAELSTIVT…VVDESLKLLE (71 aa)) is small ATPAse domain (RuvB-S). The segment at 255-338 (EKGFDQMDRT…APAPGQGALF (84 aa)) is head domain (RuvB-H). DNA contacts are provided by Arg291, Arg310, and Arg315.

It belongs to the RuvB family. As to quaternary structure, homohexamer. Forms an RuvA(8)-RuvB(12)-Holliday junction (HJ) complex. HJ DNA is sandwiched between 2 RuvA tetramers; dsDNA enters through RuvA and exits via RuvB. An RuvB hexamer assembles on each DNA strand where it exits the tetramer. Each RuvB hexamer is contacted by two RuvA subunits (via domain III) on 2 adjacent RuvB subunits; this complex drives branch migration. In the full resolvosome a probable DNA-RuvA(4)-RuvB(12)-RuvC(2) complex forms which resolves the HJ.

Its subcellular location is the cytoplasm. It carries out the reaction ATP + H2O = ADP + phosphate + H(+). Its function is as follows. The RuvA-RuvB-RuvC complex processes Holliday junction (HJ) DNA during genetic recombination and DNA repair, while the RuvA-RuvB complex plays an important role in the rescue of blocked DNA replication forks via replication fork reversal (RFR). RuvA specifically binds to HJ cruciform DNA, conferring on it an open structure. The RuvB hexamer acts as an ATP-dependent pump, pulling dsDNA into and through the RuvAB complex. RuvB forms 2 homohexamers on either side of HJ DNA bound by 1 or 2 RuvA tetramers; 4 subunits per hexamer contact DNA at a time. Coordinated motions by a converter formed by DNA-disengaged RuvB subunits stimulates ATP hydrolysis and nucleotide exchange. Immobilization of the converter enables RuvB to convert the ATP-contained energy into a lever motion, pulling 2 nucleotides of DNA out of the RuvA tetramer per ATP hydrolyzed, thus driving DNA branch migration. The RuvB motors rotate together with the DNA substrate, which together with the progressing nucleotide cycle form the mechanistic basis for DNA recombination by continuous HJ branch migration. Branch migration allows RuvC to scan DNA until it finds its consensus sequence, where it cleaves and resolves cruciform DNA. This chain is Holliday junction branch migration complex subunit RuvB, found in Geobacter sulfurreducens (strain ATCC 51573 / DSM 12127 / PCA).